The primary structure comprises 196 residues: HTH-type transcriptional regulator EcpR (196 aa).

The HTH luxR-type domain occupies 138-196; that stretch reads KDIKKDKITDREMEIIRMTAQGMQPKSIARIENCSVKTVYTHRRNAEAKLYSKIYKLVQ. A DNA-binding region (H-T-H motif) is located at residues 162–181; it reads PKSIARIENCSVKTVYTHRR.

Belongs to the EcpR/MatA family.

The protein resides in the cytoplasm. In terms of biological role, part of the ecpRABCDE operon, which encodes the E.coli common pilus (ECP). ECP is found in both commensal and pathogenic strains and plays a dual role in early-stage biofilm development and host cell recognition. Positively regulates the expression of the ecp operon. This chain is HTH-type transcriptional regulator EcpR (ecpR), found in Escherichia coli (strain K12 / DH10B).